The sequence spans 239 residues: Endonuclease V (239 aa).

Residues Asp50 and Asp118 each coordinate Mg(2+).

Belongs to the endonuclease V family. Mg(2+) serves as cofactor.

It is found in the cytoplasm. The catalysed reaction is Endonucleolytic cleavage at apurinic or apyrimidinic sites to products with a 5'-phosphate.. Functionally, DNA repair enzyme involved in the repair of deaminated bases. Selectively cleaves double-stranded DNA at the second phosphodiester bond 3' to a deoxyinosine leaving behind the intact lesion on the nicked DNA. The chain is Endonuclease V from Xylella fastidiosa (strain 9a5c).